The sequence spans 116 residues: MTLASAPAATESCNSFIPPSFDVNKVEIISDRPDCATFIFTDEDHTLGNALHYVLMKNPKVDFSGYSIPHPSDNRMNLRIQTKSNITAQESLLQGLTDIKDISRHIFETFNNALDQ.

Belongs to the archaeal Rpo11/eukaryotic RPB11/RPC19 RNA polymerase subunit family. In terms of assembly, component of the RNA polymerase I (Pol I) and RNA polymerase III (Pol III) complexes consisting of 14 and 17 subunits, respectively.

The protein localises to the nucleus. Functionally, DNA-dependent RNA polymerase catalyzes the transcription of DNA into RNA using the four ribonucleoside triphosphates as substrates. Common core component of RNA polymerases I and III which synthesize ribosomal RNA precursors and small RNAs, such as 5S rRNA and tRNAs, respectively. The protein is DNA-directed RNA polymerases I and III subunit rpc19 (rpc19) of Dictyostelium discoideum (Social amoeba).